Here is a 143-residue protein sequence, read N- to C-terminus: Ribosome-binding factor A (143 aa).

The disordered stretch occupies residues 123–143 (DKSLQENYKQNDKETKAEKLR).

Belongs to the RbfA family. As to quaternary structure, monomer. Binds 30S ribosomal subunits, but not 50S ribosomal subunits or 70S ribosomes.

Its subcellular location is the cytoplasm. Its function is as follows. One of several proteins that assist in the late maturation steps of the functional core of the 30S ribosomal subunit. Associates with free 30S ribosomal subunits (but not with 30S subunits that are part of 70S ribosomes or polysomes). Required for efficient processing of 16S rRNA. May interact with the 5'-terminal helix region of 16S rRNA. This Francisella tularensis subsp. mediasiatica (strain FSC147) protein is Ribosome-binding factor A.